Reading from the N-terminus, the 1295-residue chain is Phosphoribosylformylglycinamidine synthase (1295 aa).

The disordered stretch occupies residues 305 to 327; it reads WPGAATGSGGEIRDEGATGRGAK. Residues 307 to 318, 386 to 388, and Ala678 each bind ATP; these read GAATGSGGEIRD and TGY. The Mg(2+) site is built by Asp679, Glu718, Asn722, and Asp884. Ser886 contacts ATP. The 255-residue stretch at 1041–1295 folds into the Glutamine amidotransferase type-1 domain; that stretch reads KVAVLREQGG…IFRNARKQLG (255 aa). Cys1135 acts as the Nucleophile in catalysis. Residues His1260 and Glu1262 contribute to the active site.

It in the N-terminal section; belongs to the FGAMS family. As to quaternary structure, monomer.

The protein resides in the cytoplasm. The enzyme catalyses N(2)-formyl-N(1)-(5-phospho-beta-D-ribosyl)glycinamide + L-glutamine + ATP + H2O = 2-formamido-N(1)-(5-O-phospho-beta-D-ribosyl)acetamidine + L-glutamate + ADP + phosphate + H(+). Its pathway is purine metabolism; IMP biosynthesis via de novo pathway; 5-amino-1-(5-phospho-D-ribosyl)imidazole from N(2)-formyl-N(1)-(5-phospho-D-ribosyl)glycinamide: step 1/2. In terms of biological role, phosphoribosylformylglycinamidine synthase involved in the purines biosynthetic pathway. Catalyzes the ATP-dependent conversion of formylglycinamide ribonucleotide (FGAR) and glutamine to yield formylglycinamidine ribonucleotide (FGAM) and glutamate. The chain is Phosphoribosylformylglycinamidine synthase from Salmonella choleraesuis (strain SC-B67).